The sequence spans 331 residues: Type 2 lactosamine alpha-2,3-sialyltransferase (331 aa).

Residues 1-4 (MRGY) are Cytoplasmic-facing. Residues 5 to 25 (LVAIFLSAVFLYYVLHCILWG) form a helical; Signal-anchor for type II membrane protein membrane-spanning segment. Residues 26–331 (TNVYWAAPVE…KNLVINLTQD (306 aa)) are Lumenal-facing. Residues N129, N181, N282, N295, N308, and N327 are each glycosylated (N-linked (GlcNAc...) asparagine).

The protein belongs to the glycosyltransferase 29 family.

The protein localises to the golgi apparatus membrane. It carries out the reaction a neolactoside nLc4Cer(d18:1(4E)) + CMP-N-acetyl-beta-neuraminate = a neolactoside IV(3)-alpha-NeuAc-nLc4Cer(d18:1(4E)) + CMP + H(+). The enzyme catalyses a beta-D-galactosyl-(1-&gt;4)-N-acetyl-beta-D-glucosaminyl derivative + CMP-N-acetyl-beta-neuraminate = an N-acetyl-alpha-neuraminyl-(2-&gt;3)-beta-D-galactosyl-(1-&gt;4)-N-acetyl-beta-D-glucosaminyl derivative + CMP + H(+). The catalysed reaction is a neolactoside nLc6Cer(d18:1(4E)) + CMP-N-acetyl-beta-neuraminate = a neolactoside VI(3)-alpha-NeuNAc-nLc6Cer(d18:1(4E)) + CMP + H(+). In terms of biological role, transfers the sialyl residue from CMP-N-acetyl-beta-neuraminate to the terminal galactose residue on sugar chains of glycoproteins and glycolipids. It's alpha-2,3-sialyltransferase activity is specific toward type II glycan chains (Galbeta1-4GlcNAc) on glycoproteins and glycolipids such as neolactosides nLc4Cer and nLc6Cer, whose sialyl-products serve as precursors for the Lewis X antigen. Critically involved in the synthesis of functional selectin ligands needed for neutrophil recruitment during inflammation and lymphocyte homing to the lymph nodes. In Pongo abelii (Sumatran orangutan), this protein is Type 2 lactosamine alpha-2,3-sialyltransferase (ST3GAL6).